A 110-amino-acid chain; its full sequence is Integration host factor subunit alpha (110 aa).

It belongs to the bacterial histone-like protein family. As to quaternary structure, heterodimer of an alpha and a beta chain.

Its function is as follows. This protein is one of the two subunits of integration host factor, a specific DNA-binding protein that functions in genetic recombination as well as in transcriptional and translational control. The sequence is that of Integration host factor subunit alpha from Delftia acidovorans (strain DSM 14801 / SPH-1).